The chain runs to 493 residues: Glutamyl-tRNA(Gln) amidotransferase subunit A (493 aa).

Catalysis depends on charge relay system residues Lys79 and Ser159. Ser183 functions as the Acyl-ester intermediate in the catalytic mechanism.

The protein belongs to the amidase family. GatA subfamily. As to quaternary structure, heterotrimer of A, B and C subunits.

It catalyses the reaction L-glutamyl-tRNA(Gln) + L-glutamine + ATP + H2O = L-glutaminyl-tRNA(Gln) + L-glutamate + ADP + phosphate + H(+). Allows the formation of correctly charged Gln-tRNA(Gln) through the transamidation of misacylated Glu-tRNA(Gln) in organisms which lack glutaminyl-tRNA synthetase. The reaction takes place in the presence of glutamine and ATP through an activated gamma-phospho-Glu-tRNA(Gln). The polypeptide is Glutamyl-tRNA(Gln) amidotransferase subunit A (Brucella abortus (strain S19)).